Consider the following 197-residue polypeptide: Recombination protein RecR (197 aa).

Residues 57 to 72 form a C4-type zinc finger; it reads CSRCGYLTDFDPCLIC. In terms of domain architecture, Toprim spans 80–174; sequence SLICIGEESS…KVTRLAHGLP (95 aa).

It belongs to the RecR family.

May play a role in DNA repair. It seems to be involved in an RecBC-independent recombinational process of DNA repair. It may act with RecF and RecO. This is Recombination protein RecR from Syntrophomonas wolfei subsp. wolfei (strain DSM 2245B / Goettingen).